We begin with the raw amino-acid sequence, 216 residues long: Probable GTP-binding protein EngB (216 aa).

The region spanning 43–216 (DRLEVCFAGR…TLRSIITDLT (174 aa)) is the EngB-type G domain. GTP is bound by residues 51–58 (GRSNVGKS), 78–82 (GRTQE), 96–99 (DLPG), 163–166 (TKAD), and 197–199 (TSS). Positions 58 and 80 each coordinate Mg(2+).

Belongs to the TRAFAC class TrmE-Era-EngA-EngB-Septin-like GTPase superfamily. EngB GTPase family. Mg(2+) is required as a cofactor.

In terms of biological role, necessary for normal cell division and for the maintenance of normal septation. This Roseobacter denitrificans (strain ATCC 33942 / OCh 114) (Erythrobacter sp. (strain OCh 114)) protein is Probable GTP-binding protein EngB.